Consider the following 351-residue polypeptide: Methylthioribose-1-phosphate isomerase (351 aa).

Substrate is bound by residues 51–53 (RGA), Arg94, and Gln199. Catalysis depends on Asp240, which acts as the Proton donor. 250-251 (NK) is a binding site for substrate.

Belongs to the EIF-2B alpha/beta/delta subunits family. MtnA subfamily. In terms of assembly, homodimer.

The enzyme catalyses 5-(methylsulfanyl)-alpha-D-ribose 1-phosphate = 5-(methylsulfanyl)-D-ribulose 1-phosphate. Its pathway is amino-acid biosynthesis; L-methionine biosynthesis via salvage pathway; L-methionine from S-methyl-5-thio-alpha-D-ribose 1-phosphate: step 1/6. Catalyzes the interconversion of methylthioribose-1-phosphate (MTR-1-P) into methylthioribulose-1-phosphate (MTRu-1-P). The polypeptide is Methylthioribose-1-phosphate isomerase (Bacillus anthracis).